The following is a 62-amino-acid chain: Conotoxin TeAr151 (62 aa).

Positions 1–22 (MRCLPVFVVLLLLIASAPSVDA) are cleaved as a signal peptide. A propeptide spanning residues 23–47 (QPKTKDDVPLAPLHDNIQNTLQTLR) is cleaved from the precursor. Met55 carries the methionine sulfoxide; partial modification. Ser60 carries the post-translational modification Serine amide.

The protein belongs to the conotoxin T superfamily. Post-translationally, contains 2 disulfide bonds. In terms of processing, contains 2 disulfide bonds that can be either 'C1-C3, C2-C4' or 'C1-C4, C2-C3', since these disulfide connectivities have been observed for conotoxins with cysteine framework V (for examples, see AC P0DQQ7 and AC P81755).. In terms of tissue distribution, expressed by the venom duct. Is mostly present in part 5 of the venom duct (distal part near the pharynx), and less abundantly present in part 4 of the venom duct.

It localises to the secreted. The sequence is that of Conotoxin TeAr151 from Conus textile (Cloth-of-gold cone).